Here is a 385-residue protein sequence, read N- to C-terminus: Trehalose-phosphate phosphatase A (385 aa).

The segment at 1 to 21 is disordered; the sequence is MDMKSGHSSPVMTDSPPISNS.

The protein belongs to the trehalose phosphatase family. A divalent metal cation is required as a cofactor. Expressed in flowers.

The enzyme catalyses alpha,alpha-trehalose 6-phosphate + H2O = alpha,alpha-trehalose + phosphate. It participates in glycan biosynthesis; trehalose biosynthesis. In terms of biological role, removes the phosphate from trehalose 6-phosphate to produce free trehalose. Trehalose accumulation in plant may improve abiotic stress tolerance. The sequence is that of Trehalose-phosphate phosphatase A (TPPA) from Arabidopsis thaliana (Mouse-ear cress).